The sequence spans 545 residues: Chaperonin GroEL (545 aa).

Residues 30–33 (TLGP), Lys-51, 87–91 (DGTTT), Gly-415, and Asp-495 contribute to the ATP site.

The protein belongs to the chaperonin (HSP60) family. Forms a cylinder of 14 subunits composed of two heptameric rings stacked back-to-back. Interacts with the co-chaperonin GroES.

It localises to the cytoplasm. It catalyses the reaction ATP + H2O + a folded polypeptide = ADP + phosphate + an unfolded polypeptide.. Functionally, together with its co-chaperonin GroES, plays an essential role in assisting protein folding. The GroEL-GroES system forms a nano-cage that allows encapsulation of the non-native substrate proteins and provides a physical environment optimized to promote and accelerate protein folding. This is Chaperonin GroEL from Yersinia pestis bv. Antiqua (strain Antiqua).